The sequence spans 27 residues: Cupiennin-3a (27 aa).

Glu27 is modified (glutamic acid 1-amide).

In terms of tissue distribution, expressed by the venom gland.

It localises to the secreted. In Cupiennius salei (American wandering spider), this protein is Cupiennin-3a.